The chain runs to 199 residues: DNA repair RAD52-like protein 2, chloroplastic (199 aa).

A chloroplast-targeting transit peptide spans 1-40; that stretch reads MALQVQQTSAAFTISSPSTAAARIKLSPFRTVAVNRGVRC. N-acetylserine is present on serine 41.

Belongs to the RAD52 family. In terms of tissue distribution, expressed in roots and shoots. Expressed at low levels in cauline leaves, flower buds, flowers and siliques.

Its subcellular location is the plastid. It is found in the chloroplast. Its function is as follows. Involved in double-stranded DNA break repair. This Arabidopsis thaliana (Mouse-ear cress) protein is DNA repair RAD52-like protein 2, chloroplastic.